A 261-amino-acid polypeptide reads, in one-letter code: UPF0246 protein Daci_5283 (261 aa).

This sequence belongs to the UPF0246 family.

The protein is UPF0246 protein Daci_5283 of Delftia acidovorans (strain DSM 14801 / SPH-1).